Consider the following 58-residue polypeptide: Potassium channel toxin alpha-KTx 16.6 (58 aa).

The first 22 residues, 1–22, serve as a signal peptide directing secretion; the sequence is MKILSVLLIALIICSINICSEA. Disulfide bonds link cysteine 29–cysteine 50, cysteine 35–cysteine 55, and cysteine 39–cysteine 57.

The protein belongs to the short scorpion toxin superfamily. Potassium channel inhibitor family. Alpha-KTx 16 subfamily. Expressed by the venom gland.

The protein resides in the secreted. Its function is as follows. Inhibits potassium channel. The chain is Potassium channel toxin alpha-KTx 16.6 from Buthus israelis (Israeli scorpion).